We begin with the raw amino-acid sequence, 852 residues long: Alanine--tRNA ligase (852 aa).

Residues H554, H558, C656, and H660 each contribute to the Zn(2+) site.

Belongs to the class-II aminoacyl-tRNA synthetase family. It depends on Zn(2+) as a cofactor.

It is found in the cytoplasm. It catalyses the reaction tRNA(Ala) + L-alanine + ATP = L-alanyl-tRNA(Ala) + AMP + diphosphate. Its function is as follows. Catalyzes the attachment of alanine to tRNA(Ala) in a two-step reaction: alanine is first activated by ATP to form Ala-AMP and then transferred to the acceptor end of tRNA(Ala). Also edits incorrectly charged Ser-tRNA(Ala) and Gly-tRNA(Ala) via its editing domain. In Campylobacter curvus (strain 525.92), this protein is Alanine--tRNA ligase.